The chain runs to 129 residues: Aspartate 1-decarboxylase (129 aa).

Ser-25 serves as the catalytic Schiff-base intermediate with substrate; via pyruvic acid. Residue Ser-25 is modified to Pyruvic acid (Ser). Substrate is bound at residue Thr-57. Tyr-58 serves as the catalytic Proton donor. Gly-73 to Ala-75 serves as a coordination point for substrate.

This sequence belongs to the PanD family. In terms of assembly, heterooctamer of four alpha and four beta subunits. The cofactor is pyruvate. In terms of processing, is synthesized initially as an inactive proenzyme, which is activated by self-cleavage at a specific serine bond to produce a beta-subunit with a hydroxyl group at its C-terminus and an alpha-subunit with a pyruvoyl group at its N-terminus.

It is found in the cytoplasm. It carries out the reaction L-aspartate + H(+) = beta-alanine + CO2. It functions in the pathway cofactor biosynthesis; (R)-pantothenate biosynthesis; beta-alanine from L-aspartate: step 1/1. Functionally, catalyzes the pyruvoyl-dependent decarboxylation of aspartate to produce beta-alanine. The polypeptide is Aspartate 1-decarboxylase (Prosthecochloris aestuarii (strain DSM 271 / SK 413)).